Reading from the N-terminus, the 125-residue chain is MFEDKELEKHITPQTLKPKIKQNPLYSHINIIQTEENKSKPSWTIQDYDRHTSHGQLADYMKEDPRDLSFWLEDLYTPGYDSLLKKKAAEMKRNKICKTFAFITLFVCAVVIIITVPIVVKQSRD.

The N-linked (GlcNAc...) asparagine glycan is linked to asparagine 37. A helical transmembrane segment spans residues 100 to 120; that stretch reads FAFITLFVCAVVIIITVPIVV.

Belongs to the MINAR family. As to quaternary structure, interacts with NOTCH2. As to expression, highly expressed in the auditory hair cells.

It localises to the lysosome membrane. The protein resides in the endoplasmic reticulum membrane. In terms of biological role, binds cholesterol and may regulate the distribution and homeostasis of cholesterol in hair cells. May play a role in angiogenesis. The chain is Major intrinsically disordered NOTCH2-binding receptor 1-like from Danio rerio (Zebrafish).